The sequence spans 232 residues: Ribonuclease 3 (232 aa).

The 129-residue stretch at 7-135 folds into the RNase III domain; the sequence is IQAVESKLKF…ILGAVYLDGG (129 aa). Residue E48 participates in Mg(2+) binding. D52 is a catalytic residue. The Mg(2+) site is built by N121 and E124. E124 is a catalytic residue. The DRBM domain maps to 160–229; it reads NPKNRLQQFT…AKQALSTHDD (70 aa).

Belongs to the ribonuclease III family. In terms of assembly, homodimer. Requires Mg(2+) as cofactor.

It is found in the cytoplasm. The enzyme catalyses Endonucleolytic cleavage to 5'-phosphomonoester.. Digests double-stranded RNA. Involved in the processing of primary rRNA transcript to yield the immediate precursors to the large and small rRNAs (23S and 16S). Processes some mRNAs, and tRNAs when they are encoded in the rRNA operon. Processes pre-crRNA and tracrRNA of type II CRISPR loci if present in the organism. The polypeptide is Ribonuclease 3 (Chlamydia muridarum (strain MoPn / Nigg)).